A 26-amino-acid chain; its full sequence is Fumarylacetoacetate hydrolase domain-containing protein 2A (26 aa).

The protein belongs to the FAH family. The cofactor is Ca(2+). Mg(2+) serves as cofactor.

Its function is as follows. May have hydrolase activity. The sequence is that of Fumarylacetoacetate hydrolase domain-containing protein 2A from Mesocricetus auratus (Golden hamster).